A 116-amino-acid polypeptide reads, in one-letter code: Large ribosomal subunit protein bL19 (116 aa).

This sequence belongs to the bacterial ribosomal protein bL19 family.

Functionally, this protein is located at the 30S-50S ribosomal subunit interface and may play a role in the structure and function of the aminoacyl-tRNA binding site. The polypeptide is Large ribosomal subunit protein bL19 (Mycoplasma mobile (strain ATCC 43663 / 163K / NCTC 11711) (Mesomycoplasma mobile)).